Reading from the N-terminus, the 66-residue chain is Protein I177L (66 aa).

An N-linked (GlcNAc...) asparagine; by host glycan is attached at asparagine 11.

The protein belongs to the asfivirus I177L family.

It localises to the virion. The protein is Protein I177L of African swine fever virus (strain Badajoz 1971 Vero-adapted) (Ba71V).